The sequence spans 318 residues: NADH-quinone oxidoreductase subunit H 2 (318 aa).

The next 9 helical transmembrane spans lie at 4-24 (LLIALFSLILLLALLGAAGVF), 77-97 (LAPALAAFPMLAGFGVVAFAP), 106-126 (VGVLFVMGMLALTVWALVLGA), 146-166 (LAYESFLGLSLMGCVLLAGSF), 179-199 (LWFILLQPLGAALFFLAGLAA), 214-234 (LVAGFMTEYSGMSFALFFLGE), 238-258 (ILLVAALFTTLFLGGWAGPIL), 262-282 (IWFGLKVAAISVVFVWLRAAL), and 293-313 (FAWKVALPLALLNLLVTAWIA).

Belongs to the complex I subunit 1 family. In terms of assembly, NDH-1 is composed of 14 different subunits. Subunits NuoA, H, J, K, L, M, N constitute the membrane sector of the complex.

Its subcellular location is the cell inner membrane. The catalysed reaction is a quinone + NADH + 5 H(+)(in) = a quinol + NAD(+) + 4 H(+)(out). Functionally, NDH-1 shuttles electrons from NADH, via FMN and iron-sulfur (Fe-S) centers, to quinones in the respiratory chain. The immediate electron acceptor for the enzyme in this species is believed to be ubiquinone. Couples the redox reaction to proton translocation (for every two electrons transferred, four hydrogen ions are translocated across the cytoplasmic membrane), and thus conserves the redox energy in a proton gradient. This subunit may bind ubiquinone. In Cereibacter sphaeroides (strain ATCC 17023 / DSM 158 / JCM 6121 / CCUG 31486 / LMG 2827 / NBRC 12203 / NCIMB 8253 / ATH 2.4.1.) (Rhodobacter sphaeroides), this protein is NADH-quinone oxidoreductase subunit H 2.